The chain runs to 620 residues: Glutathione-regulated potassium-efflux system protein KefC (620 aa).

The next 12 helical transmembrane spans lie at 4–24 (HTLIQALIYLGSAALIVPIAV), 26–46 (LGLGSVLGYLIAGCIIGPWGL), 54–74 (SILHFAEIGVVLMLFIIGLEL), 90–110 (GALQMVICGGLLGLFCMLLGL), 114–134 (VAELIGMTLALSSTAIAMQAM), 149–169 (FAVLLFQDIAAIPLVAMIPLL), 178–198 (MGAFALSALKVAGALVLVVLL), 218–238 (VFSAVALFLVFGFGLLLEEVG), 270–290 (GLLLGLFFIGVGMSIDFGTLL), 294–314 (LRIVILLLGFLIIKIAMLWLI), 327–347 (WFAVLLGQGSEFAFVVFGAAQ), and 359–379 (SLTLAVALSMAATPILLVILN). Residues 399-518 (QPRVIIAGFG…AGVEKPERET (120 aa)) form the RCK N-terminal domain. Residues 597–620 (GWQGTEEGKHTGNMADEPETKPSS) form a disordered region.

Belongs to the monovalent cation:proton antiporter 2 (CPA2) transporter (TC 2.A.37) family. KefC subfamily. As to quaternary structure, homodimer. Interacts with the regulatory subunit KefF.

It is found in the cell inner membrane. Pore-forming subunit of a potassium efflux system that confers protection against electrophiles. Catalyzes K(+)/H(+) antiport. In Escherichia coli O7:K1 (strain IAI39 / ExPEC), this protein is Glutathione-regulated potassium-efflux system protein KefC.